The following is a 1215-amino-acid chain: Cellulose synthase-like protein D4 (1215 aa).

Disordered regions lie at residues 24-46 (GGDAVVRRGSGLTSPVPRHSLGS) and 206-231 (SDTDESDSVTDDDDDEAVSSSEERDQ). The segment covering 207–222 (DTDESDSVTDDDDDEA) has biased composition (acidic residues). Helical transmembrane passes span 321–341 (AILSPYRLLIAIRLVALGFFL) and 352–372 (AVWLWAMSVACEVWFAFSWLL). Residues Asp-452 and Asp-905 contribute to the active site. A run of 6 helical transmembrane segments spans residues 988 to 1008 (VFLLAYCLLPAVSLFSGKFIV), 1014 to 1034 (TFLAFLLVITLTLCLLALLEI), 1060 to 1080 (PAAVLQGLLKVIAGVDISFTL), 1114 to 1134 (LMVPPVTIMMVNAVAIAVAAA), 1147 to 1167 (LLGGAFFSFWVLCHLYPFAKG), and 1177 to 1197 (TIVFVWSGLISMIISLLWVYI).

This sequence belongs to the glycosyltransferase 2 family. Plant cellulose synthase-like D subfamily.

The protein resides in the golgi apparatus membrane. Thought to be a Golgi-localized beta-glycan synthase that polymerize the backbones of noncellulosic polysaccharides (hemicelluloses) of plant cell wall. The chain is Cellulose synthase-like protein D4 (CSLD4) from Oryza sativa subsp. japonica (Rice).